Here is a 564-residue protein sequence, read N- to C-terminus: Nucleoprotein (564 aa).

The segment at 54–236 (LRKTKRGEED…VTKDESSINI (183 aa)) is binding site for the cap structure m7GTP. Positions 380 and 382 each coordinate Mn(2+). Zn(2+) contacts are provided by Glu-390, Cys-497, His-500, and Cys-525. Asp-529 contacts Mn(2+).

This sequence belongs to the arenaviridae nucleocapsid protein family. As to quaternary structure, homomultimerizes to form the nucleocapsid. Binds to viral genomic RNA. Interacts with glycoprotein G2. Interacts with protein Z; this interaction probably directs the encapsidated genome to budding sites. Interacts with protein L; this interaction does not interfere with Z-L interaction. Interacts with host IKBKE (via Protein kinase domain); the interaction inhibits IKBKE kinase activity.

The protein resides in the virion. It localises to the host cytoplasm. In terms of biological role, encapsidates the genome, protecting it from nucleases. The encapsidated genomic RNA is termed the nucleocapsid (NC). Serves as template for viral transcription and replication. The increased presence of protein N in host cell does not seem to trigger the switch from transcription to replication as observed in other negative strain RNA viruses. Through the interaction with host IKBKE, strongly inhibits the phosphorylation and nuclear translocation of host IRF3, a protein involved in interferon activation pathway, leading to the inhibition of interferon-beta and IRF3-dependent promoters activation. Also encodes a functional 3'-5' exoribonuclease that degrades preferentially dsRNA substrates and thereby participates in the suppression of interferon induction. This is Nucleoprotein from Akodon azarae (Azara's grass mouse).